The primary structure comprises 1441 residues: Protein clueless (1441 aa).

2 disordered regions span residues 1–79 (MALD…EAAT) and 106–131 (VAAN…ELES). Polar residues predominate over residues 8–22 (KNSSSAATGDANTVK). Positions 54 to 63 (AKKKGKKNRN) are enriched in basic residues. Composition is skewed to low complexity over residues 64–79 (KSPP…EAAT) and 106–126 (VAAN…AASS). Ser-273 carries the phosphoserine modification. A Clu domain is found at 427 to 669 (RAEDAFSSKL…RTFPPDVNFL (243 aa)). Positions 726–753 (KKQDEAKEGTKEPASETEKESPPKAITE) are enriched in basic and acidic residues. Disordered stretches follow at residues 726–769 (KKQD…GETK) and 961–1009 (EIHK…SGGT). Residues 964–977 (KKRTNTKYNKHKSS) are compositionally biased toward basic residues. Over residues 978-1009 (KSSGSGSKQSGQTSNQNGTSTSPSSSTASGGT) the composition is skewed to low complexity. TPR repeat units follow at residues 1109–1142 (AYNF…LNNV), 1235–1268 (ALID…NLKY), and 1270–1303 (GAKA…EKET).

The protein belongs to the CLU family.

The protein localises to the cytoplasm. In terms of biological role, mRNA-binding protein involved in proper cytoplasmic distribution of mitochondria. The sequence is that of Protein clueless from Drosophila willistoni (Fruit fly).